A 32-amino-acid chain; its full sequence is MSDINATRVPAWLAECPCVGDDISHLLTRGEK.

Residues 1-10 (MSDINATRVP) constitute a propeptide that is removed on maturation. Positions 11 to 17 (AWLAECP) form a cross-link, cyclopeptide (Ala-Pro). Positions 18–32 (CVGDDISHLLTRGEK) are excised as a propeptide.

The protein belongs to the MSDIN fungal toxin family. Processed by the macrocyclase-peptidase enzyme POPB to yield a toxic cyclic heptapeptide. POPB first removes 10 residues from the N-terminus. Conformational trapping of the remaining peptide forces the enzyme to release this intermediate rather than proceed to macrocyclization. The enzyme rebinds the remaining peptide in a different conformation and catalyzes macrocyclization of the N-terminal 7 residues.

Its function is as follows. Probable toxin that belongs to the MSDIN-like toxin family responsible for a large number of food poisoning cases and deaths. The chain is MSDIN-like toxin proprotein 2 from Amanita rimosa.